Consider the following 559-residue polypeptide: Glucose-6-phosphate isomerase (559 aa).

The Proton donor role is filled by Glu352. Active-site residues include His383 and Lys511.

This sequence belongs to the GPI family.

The protein localises to the cytoplasm. It catalyses the reaction alpha-D-glucose 6-phosphate = beta-D-fructose 6-phosphate. The protein operates within carbohydrate biosynthesis; gluconeogenesis. It participates in carbohydrate degradation; glycolysis; D-glyceraldehyde 3-phosphate and glycerone phosphate from D-glucose: step 2/4. Catalyzes the reversible isomerization of glucose-6-phosphate to fructose-6-phosphate. This Chlorobium phaeobacteroides (strain DSM 266 / SMG 266 / 2430) protein is Glucose-6-phosphate isomerase.